The sequence spans 192 residues: Ion-translocating oxidoreductase complex subunit B (192 aa).

A hydrophobic region spans residues 1-26 (MTAIWIAIAALSALALAFGLVLGYAS). One can recognise a 4Fe-4S domain in the interval 32 to 91 (ENDPIVEEVEAMLPQSQCGQCGYPGCRPYAEAVSLNGESINKCGPGGEAMMLKLAEKLNV). Positions 49, 52, 57, 74, 117, 120, 123, 127, 147, 150, 153, and 157 each coordinate [4Fe-4S] cluster. 4Fe-4S ferredoxin-type domains are found at residues 108–137 (HVAWIDESNCIGCTKCIQACPVDAIIGSTK) and 138–167 (AVHTVVSDLCTGCDLCISPCPTDCIELRPI).

This sequence belongs to the 4Fe4S bacterial-type ferredoxin family. RnfB subfamily. As to quaternary structure, the complex is composed of six subunits: RnfA, RnfB, RnfC, RnfD, RnfE and RnfG. [4Fe-4S] cluster serves as cofactor.

It is found in the cell inner membrane. Its function is as follows. Part of a membrane-bound complex that couples electron transfer with translocation of ions across the membrane. In Pectobacterium atrosepticum (strain SCRI 1043 / ATCC BAA-672) (Erwinia carotovora subsp. atroseptica), this protein is Ion-translocating oxidoreductase complex subunit B.